Here is a 481-residue protein sequence, read N- to C-terminus: Aspartyl/glutamyl-tRNA(Asn/Gln) amidotransferase subunit B (481 aa).

Residues 29–50 (SSSKSSHTDPKNTNISPIDLGH) are disordered.

It belongs to the GatB/GatE family. GatB subfamily. In terms of assembly, heterotrimer of A, B and C subunits.

The enzyme catalyses L-glutamyl-tRNA(Gln) + L-glutamine + ATP + H2O = L-glutaminyl-tRNA(Gln) + L-glutamate + ADP + phosphate + H(+). It catalyses the reaction L-aspartyl-tRNA(Asn) + L-glutamine + ATP + H2O = L-asparaginyl-tRNA(Asn) + L-glutamate + ADP + phosphate + 2 H(+). In terms of biological role, allows the formation of correctly charged Asn-tRNA(Asn) or Gln-tRNA(Gln) through the transamidation of misacylated Asp-tRNA(Asn) or Glu-tRNA(Gln) in organisms which lack either or both of asparaginyl-tRNA or glutaminyl-tRNA synthetases. The reaction takes place in the presence of glutamine and ATP through an activated phospho-Asp-tRNA(Asn) or phospho-Glu-tRNA(Gln). This is Aspartyl/glutamyl-tRNA(Asn/Gln) amidotransferase subunit B from Malacoplasma penetrans (strain HF-2) (Mycoplasma penetrans).